The chain runs to 147 residues: Large ribosomal subunit protein uL15 (147 aa).

This sequence belongs to the universal ribosomal protein uL15 family. In terms of assembly, part of the 50S ribosomal subunit.

Binds to the 23S rRNA. The chain is Large ribosomal subunit protein uL15 from Blochmanniella floridana.